Consider the following 673-residue polypeptide: Flotillin family inner membrane protein sll1021 (673 aa).

The helical transmembrane segment at 60-80 (LLFFPVVIIAVIFLILVTIFL) threads the bilayer. A disordered region spans residues 639-673 (LQDPPSVSPPSAAVSEDDWPDLAPPTETNFSPEEI). A compositionally biased stretch (polar residues) spans 664-673 (TETNFSPEEI).

This sequence belongs to the band 7/mec-2 family. Flotillin subfamily. Homooligomerizes.

The protein resides in the cell inner membrane. It is found in the membrane raft. Found in functional membrane microdomains (FMM) that may be equivalent to eukaryotic membrane rafts. FMMs are highly dynamic and increase in number as cells age. Flotillins are thought to be important factors in membrane fluidity. This is Flotillin family inner membrane protein sll1021 from Synechocystis sp. (strain ATCC 27184 / PCC 6803 / Kazusa).